Consider the following 275-residue polypeptide: Nuclear egress protein 2 (275 aa).

Over 1 to 251 (MDSYNYRDFA…SERVKRRPVR (251 aa)) the chain is Perinuclear space. A disordered region spans residues 197–221 (CDRSNGIVSPREHRECRERQKRRPT). Residues 252-272 (IAAAILAFVFVAVILAIATKG) traverse the membrane as a helical segment. The Nuclear segment spans residues 273–275 (RLF).

Belongs to the herpesviridae NEC2 protein family. As to quaternary structure, forms a heterohexameric complex with NEC1. Phosphorylated.

Its subcellular location is the host nucleus inner membrane. Plays an essential role in virion nuclear egress, the first step of virion release from infected cell. Within the host nucleus, NEC1 interacts with the newly formed capsid through the vertexes and directs it to the inner nuclear membrane by associating with NEC2. Induces the budding of the capsid at the inner nuclear membrane as well as its envelopment into the perinuclear space. There, the NEC1/NEC2 complex promotes the fusion of the enveloped capsid with the outer nuclear membrane and the subsequent release of the viral capsid into the cytoplasm where it will reach the secondary budding sites in the host Golgi or trans-Golgi network. The protein is Nuclear egress protein 2 of Equus caballus (Horse).